Consider the following 248-residue polypeptide: 1-(5-phosphoribosyl)-5-[(5-phosphoribosylamino)methylideneamino] imidazole-4-carboxamide isomerase (248 aa).

The active-site Proton acceptor is the aspartate 8. Aspartate 131 (proton donor) is an active-site residue.

Belongs to the HisA/HisF family.

It is found in the cytoplasm. The catalysed reaction is 1-(5-phospho-beta-D-ribosyl)-5-[(5-phospho-beta-D-ribosylamino)methylideneamino]imidazole-4-carboxamide = 5-[(5-phospho-1-deoxy-D-ribulos-1-ylimino)methylamino]-1-(5-phospho-beta-D-ribosyl)imidazole-4-carboxamide. Its pathway is amino-acid biosynthesis; L-histidine biosynthesis; L-histidine from 5-phospho-alpha-D-ribose 1-diphosphate: step 4/9. The sequence is that of 1-(5-phosphoribosyl)-5-[(5-phosphoribosylamino)methylideneamino] imidazole-4-carboxamide isomerase from Nitrosomonas eutropha (strain DSM 101675 / C91 / Nm57).